Here is a 394-residue protein sequence, read N- to C-terminus: Na(+)/H(+) antiporter NhaA (394 aa).

A run of 11 helical transmembrane segments spans residues 17–37, 59–79, 95–115, 124–144, 154–174, 177–197, 213–233, 261–281, 287–307, 328–348, and 363–383; these read ILLM…LAGV, LLLW…GLEV, SLPS…YLAF, VGWA…MALL, VFLL…IALF, TDLS…MVAL, FILW…GVII, FMIL…NMTL, PITL…VLLF, IIPV…IASL, and LGIL…LAKV.

Belongs to the NhaA Na(+)/H(+) (TC 2.A.33) antiporter family.

It localises to the cell inner membrane. The catalysed reaction is Na(+)(in) + 2 H(+)(out) = Na(+)(out) + 2 H(+)(in). Its function is as follows. Na(+)/H(+) antiporter that extrudes sodium in exchange for external protons. In Shewanella frigidimarina (strain NCIMB 400), this protein is Na(+)/H(+) antiporter NhaA.